Here is a 42-residue protein sequence, read N- to C-terminus: Large ribosomal subunit protein bL36 (42 aa).

The protein belongs to the bacterial ribosomal protein bL36 family.

The sequence is that of Large ribosomal subunit protein bL36 from Ehrlichia chaffeensis (strain ATCC CRL-10679 / Arkansas).